The chain runs to 96 residues: Co-chaperonin GroES (96 aa).

It belongs to the GroES chaperonin family. Heptamer of 7 subunits arranged in a ring. Interacts with the chaperonin GroEL.

The protein localises to the cytoplasm. Functionally, together with the chaperonin GroEL, plays an essential role in assisting protein folding. The GroEL-GroES system forms a nano-cage that allows encapsulation of the non-native substrate proteins and provides a physical environment optimized to promote and accelerate protein folding. GroES binds to the apical surface of the GroEL ring, thereby capping the opening of the GroEL channel. The sequence is that of Co-chaperonin GroES from Cupriavidus taiwanensis (strain DSM 17343 / BCRC 17206 / CCUG 44338 / CIP 107171 / LMG 19424 / R1) (Ralstonia taiwanensis (strain LMG 19424)).